The primary structure comprises 814 residues: DNA gyrase subunit A (814 aa).

Residues 32–499 (LPDVRDGLKP…GVIEFREEDL (468 aa)) enclose the Topo IIA-type catalytic domain. Tyr120 (O-(5'-phospho-DNA)-tyrosine intermediate) is an active-site residue. The short motif at 526 to 532 (QHRAGRG) is the GyrA-box element.

Belongs to the type II topoisomerase GyrA/ParC subunit family. Heterotetramer, composed of two GyrA and two GyrB chains. In the heterotetramer, GyrA contains the active site tyrosine that forms a transient covalent intermediate with DNA, while GyrB binds cofactors and catalyzes ATP hydrolysis.

Its subcellular location is the cytoplasm. It catalyses the reaction ATP-dependent breakage, passage and rejoining of double-stranded DNA.. In terms of biological role, a type II topoisomerase that negatively supercoils closed circular double-stranded (ds) DNA in an ATP-dependent manner to modulate DNA topology and maintain chromosomes in an underwound state. Negative supercoiling favors strand separation, and DNA replication, transcription, recombination and repair, all of which involve strand separation. Also able to catalyze the interconversion of other topological isomers of dsDNA rings, including catenanes and knotted rings. Type II topoisomerases break and join 2 DNA strands simultaneously in an ATP-dependent manner. The chain is DNA gyrase subunit A from Dehalogenimonas lykanthroporepellens (strain ATCC BAA-1523 / JCM 15061 / BL-DC-9).